We begin with the raw amino-acid sequence, 542 residues long: MAKNIKFDIEARDGLKRGVDALANAVKVTLGPKGRNVIIGKSFGGPTVTKDGVTVAKEIELQDPLENMGAQMVKEVASKTNDLAGDGTTTATVLAQAIVKEGLKNVAAGANPMDLKRGIDKAVEAIVADLTKQAKVVGSDSEKIKQIASISANNDEVIGELIANAFAKVGKEGVITVEEAKGTDTYVDVVEGMQFDRGYLSPYFVTNPEKMDAELENPYILLYDKKVSSLKELLPVLEPVAQSGKPLLIIAEDVDGEALSTLVVNKLRGALKIAAVKAPGFGDRRKAMLEDIAILTGGTVISEERGFTLENTTIEMLGTAKRVTIDKDNTTIVSGAGEADMIKNRVNQIKGQMEASTSDYDKEKLQERLAKLAGGVAVLYVGAASEVEMKEKKDRVDDALHATRAAVEEGIVAGGGVALLRAKNVLKDIKADNADEATGIQIVSRAVEAPLRTIVENAGLEGSVVVAKVAEGSGDFGYNAKTDEYVDMLKAGIIDPKKVTRVALENAASVAGMILTTECALVEIKEENAGGGQMGGGMPGMM.

ATP contacts are provided by residues 29–32, lysine 50, 86–90, glycine 415, and aspartate 495; these read TLGP and DGTTT.

This sequence belongs to the chaperonin (HSP60) family. As to quaternary structure, forms a cylinder of 14 subunits composed of two heptameric rings stacked back-to-back. Interacts with the co-chaperonin GroES.

It is found in the cytoplasm. The catalysed reaction is ATP + H2O + a folded polypeptide = ADP + phosphate + an unfolded polypeptide.. In terms of biological role, together with its co-chaperonin GroES, plays an essential role in assisting protein folding. The GroEL-GroES system forms a nano-cage that allows encapsulation of the non-native substrate proteins and provides a physical environment optimized to promote and accelerate protein folding. The sequence is that of Chaperonin GroEL from Flavobacterium psychrophilum (strain ATCC 49511 / DSM 21280 / CIP 103535 / JIP02/86).